The primary structure comprises 183 residues: Ribosome-recycling factor (183 aa).

The protein belongs to the RRF family.

Its subcellular location is the cytoplasm. Functionally, responsible for the release of ribosomes from messenger RNA at the termination of protein biosynthesis. May increase the efficiency of translation by recycling ribosomes from one round of translation to another. The polypeptide is Ribosome-recycling factor (Clostridium tetani (strain Massachusetts / E88)).